A 131-amino-acid polypeptide reads, in one-letter code: Period circadian protein (131 aa).

Positions 29 to 109 are disordered; sequence VTAPVELDPP…NSAGGASGGV (81 aa). Residues 71–93 are compositionally biased toward low complexity; it reads SGNFTTGSNVRMSSVTNTSNAGT. The segment covering 94–109 has biased composition (gly residues); sequence GTSGGGNSAGGASGGV.

Forms a heterodimer with timeless (TIM); the complex then translocates into the nucleus. Post-translationally, phosphorylated with a circadian rhythmicity, probably by the double-time protein (dbt). Phosphorylation could be implicated in the stability of per monomer and in the formation of heterodimer per-tim.

It is found in the nucleus. It localises to the cytoplasm. The protein resides in the perinuclear region. Its function is as follows. Essential for biological clock functions. Determines the period length of circadian and ultradian rhythms; an increase in PER dosage leads to shortened circadian rhythms and a decrease leads to lengthened circadian rhythms. Essential for the circadian rhythmicity of locomotor activity, eclosion behavior, and for the rhythmic component of the male courtship song that originates in the thoracic nervous system. The biological cycle depends on the rhythmic formation and nuclear localization of the TIM-PER complex. Light induces the degradation of TIM, which promotes elimination of PER. Nuclear activity of the heterodimer coordinatively regulates PER and TIM transcription through a negative feedback loop. Behaves as a negative element in circadian transcriptional loop. Does not appear to bind DNA, suggesting indirect transcriptional inhibition. The sequence is that of Period circadian protein (per) from Zaprionus tuberculatus (Vinegar fly).